A 106-amino-acid polypeptide reads, in one-letter code: Small ribosomal subunit protein uS10 (106 aa).

It belongs to the universal ribosomal protein uS10 family. Part of the 30S ribosomal subunit.

Its function is as follows. Involved in the binding of tRNA to the ribosomes. The protein is Small ribosomal subunit protein uS10 of Parasynechococcus marenigrum (strain WH8102).